Consider the following 376-residue polypeptide: Carboxylic ester hydrolase LipN (376 aa).

Active-site residues include Ser-216, Asp-316, and His-346.

It belongs to the 'GDXG' lipolytic enzyme family.

The protein resides in the cytoplasm. It carries out the reaction a carboxylic ester + H2O = an alcohol + a carboxylate + H(+). It catalyses the reaction an acetyl ester + H2O = an aliphatic alcohol + acetate + H(+). The enzyme catalyses a butanoate ester + H2O = an aliphatic alcohol + butanoate + H(+). The catalysed reaction is an octanoate ester + H2O = an aliphatic alcohol + octanoate + H(+). It carries out the reaction decanoate ester + H2O = decanoate + an aliphatic alcohol + H(+). It catalyses the reaction a dodecanoate ester + H2O = an aliphatic alcohol + dodecanoate + H(+). The enzyme catalyses 1,2,3-tributanoylglycerol + H2O = dibutanoylglycerol + butanoate + H(+). The catalysed reaction is 4-acetoxyphenol + H2O = hydroquinone + acetate + H(+). Its activity is regulated as follows. Completely inhibited by tetrahydrolipstatin (THL), RHC-80267 and N-bromosuccinimide. Its function is as follows. Non specific carboxylic ester hydrolase. Hydrolyzes various pNP-esters, with a preference for short carbon chain substrates. Can also hydrolyze tributyrin to di- and monobutyrin and 4-hydroxyphenylacetate to hydroquinone. The polypeptide is Carboxylic ester hydrolase LipN (Mycobacterium tuberculosis (strain ATCC 25618 / H37Rv)).